Reading from the N-terminus, the 97-residue chain is Small ribosomal subunit protein bS20 (97 aa).

Residues 76–85 are compositionally biased toward basic residues; it reads RNNGARKKAG. The tract at residues 76-97 is disordered; that stretch reads RNNGARKKAGLAKALQKVSQAS. The span at 86–97 shows a compositional bias: low complexity; sequence LAKALQKVSQAS.

Belongs to the bacterial ribosomal protein bS20 family.

Its function is as follows. Binds directly to 16S ribosomal RNA. The chain is Small ribosomal subunit protein bS20 from Microcystis aeruginosa (strain NIES-843 / IAM M-2473).